The chain runs to 251 residues: Transcription factor bHLH144 (251 aa).

Disordered regions lie at residues 1 to 20, 130 to 161, and 173 to 202; these read MQNNQFPHFSDEVGDRNMHN, YEENDDNEGEEDGGDSEEVSTARTSSRDYGNT, and NNNNNNNSRKQSLSGSASSSNNDGKGRKKM. Over residues 9–18 the composition is skewed to basic and acidic residues; it reads FSDEVGDRNM. Acidic residues predominate over residues 130–147; that stretch reads YEENDDNEGEEDGGDSEE. Residues 148–161 are compositionally biased toward polar residues; that stretch reads VSTARTSSRDYGNT. The span at 173-192 shows a compositional bias: low complexity; that stretch reads NNNNNNNSRKQSLSGSASSS. One can recognise a bHLH domain in the interval 186–235; sequence SGSASSSNNDGKGRKKMKKMMGVLRRIVPGGEQMNTACVLDEAVQYLKSL.

As to quaternary structure, homodimer. Interacts with LHW.

Its subcellular location is the nucleus. The polypeptide is Transcription factor bHLH144 (BHLH144) (Arabidopsis thaliana (Mouse-ear cress)).